The following is a 369-amino-acid chain: UDP-N-acetylglucosamine--N-acetylmuramyl-(pentapeptide) pyrophosphoryl-undecaprenol N-acetylglucosamine transferase (369 aa).

Residues 16 to 18 (TGG), N130, R171, S203, I253, and Q298 contribute to the UDP-N-acetyl-alpha-D-glucosamine site.

It belongs to the glycosyltransferase 28 family. MurG subfamily.

The protein resides in the cell inner membrane. It carries out the reaction di-trans,octa-cis-undecaprenyl diphospho-N-acetyl-alpha-D-muramoyl-L-alanyl-D-glutamyl-meso-2,6-diaminopimeloyl-D-alanyl-D-alanine + UDP-N-acetyl-alpha-D-glucosamine = di-trans,octa-cis-undecaprenyl diphospho-[N-acetyl-alpha-D-glucosaminyl-(1-&gt;4)]-N-acetyl-alpha-D-muramoyl-L-alanyl-D-glutamyl-meso-2,6-diaminopimeloyl-D-alanyl-D-alanine + UDP + H(+). It functions in the pathway cell wall biogenesis; peptidoglycan biosynthesis. In terms of biological role, cell wall formation. Catalyzes the transfer of a GlcNAc subunit on undecaprenyl-pyrophosphoryl-MurNAc-pentapeptide (lipid intermediate I) to form undecaprenyl-pyrophosphoryl-MurNAc-(pentapeptide)GlcNAc (lipid intermediate II). The polypeptide is UDP-N-acetylglucosamine--N-acetylmuramyl-(pentapeptide) pyrophosphoryl-undecaprenol N-acetylglucosamine transferase (Cytophaga hutchinsonii (strain ATCC 33406 / DSM 1761 / CIP 103989 / NBRC 15051 / NCIMB 9469 / D465)).